The primary structure comprises 903 residues: Protein translocase subunit SecA (903 aa).

Residues Gln-87, 105-109 (GEGKT), and Asp-512 each bind ATP. Zn(2+)-binding residues include Cys-887, Cys-889, Cys-898, and His-899.

It belongs to the SecA family. As to quaternary structure, monomer and homodimer. Part of the essential Sec protein translocation apparatus which comprises SecA, SecYEG and auxiliary proteins SecDF-YajC and YidC. The cofactor is Zn(2+).

The protein resides in the cell inner membrane. It localises to the cytoplasm. The enzyme catalyses ATP + H2O + cellular proteinSide 1 = ADP + phosphate + cellular proteinSide 2.. In terms of biological role, part of the Sec protein translocase complex. Interacts with the SecYEG preprotein conducting channel. Has a central role in coupling the hydrolysis of ATP to the transfer of proteins into and across the cell membrane, serving both as a receptor for the preprotein-SecB complex and as an ATP-driven molecular motor driving the stepwise translocation of polypeptide chains across the membrane. This is Protein translocase subunit SecA from Photorhabdus laumondii subsp. laumondii (strain DSM 15139 / CIP 105565 / TT01) (Photorhabdus luminescens subsp. laumondii).